Reading from the N-terminus, the 889-residue chain is Valine--tRNA ligase (889 aa).

Positions 50-60 (PNVTGKLHLGH) match the 'HIGH' region motif. Positions 532–536 (KMSKS) match the 'KMSKS' region motif. Lys535 contributes to the ATP binding site. A coiled-coil region spans residues 816-889 (LAELVDLDEE…QRLVDIKAEA (74 aa)).

Belongs to the class-I aminoacyl-tRNA synthetase family. ValS type 1 subfamily. In terms of assembly, monomer.

It is found in the cytoplasm. The enzyme catalyses tRNA(Val) + L-valine + ATP = L-valyl-tRNA(Val) + AMP + diphosphate. Functionally, catalyzes the attachment of valine to tRNA(Val). As ValRS can inadvertently accommodate and process structurally similar amino acids such as threonine, to avoid such errors, it has a 'posttransfer' editing activity that hydrolyzes mischarged Thr-tRNA(Val) in a tRNA-dependent manner. The polypeptide is Valine--tRNA ligase (Lactiplantibacillus plantarum (strain ATCC BAA-793 / NCIMB 8826 / WCFS1) (Lactobacillus plantarum)).